Here is a 559-residue protein sequence, read N- to C-terminus: S-layer protein (559 aa).

A signal peptide spans 1 to 28 (MAMSLKKIGAIAVGGAMVASALASGVMA). Residues N108, N130, N155, N222, and N373 are each glycosylated (N-linked (GlcNAc...) asparagine).

This sequence belongs to the Mj S-layer protein family.

It localises to the secreted. The protein resides in the cell wall. Its subcellular location is the S-layer. Its function is as follows. S-layer protein. The S-layer is a paracrystalline mono-layered assembly of proteins which coat the surface of the cell. The chain is S-layer protein from Methanothermococcus thermolithotrophicus (Methanococcus thermolithotrophicus).